A 2594-amino-acid chain; its full sequence is Protein sevenless (2594 aa).

2 disordered regions span residues 1 to 34 (MFWREDAAQQQQQQQQQQQQQQQQQQPPHPPKRL) and 49 to 92 (KMST…RVRR). Over 1-2141 (MFWREDAAQQ…FVSPEKRGSL (2141 aa)) the chain is Extracellular. Low complexity predominate over residues 9–26 (QQQQQQQQQQQQQQQQQQ). Asn-77, Asn-401, Asn-508, Asn-532, Asn-641, Asn-667, Asn-778, Asn-797, Asn-874, and Asn-980 each carry an N-linked (GlcNAc...) asparagine glycan. 2 Fibronectin type-III domains span residues 358–462 (ETTQ…TPME) and 468–560 (APII…SPLE). The Fibronectin type-III 3 domain maps to 838–938 (PPAPRELRAL…APLATRTWPL (101 aa)). The LDL-receptor class B repeat unit spans residues 1024–1066 (GLLYWTDLARDCVQRLDPFSGERELLPIFGARHLALDSAQGHL). Fibronectin type-III domains are found at residues 1227–1317 (LAVP…QLDT) and 1324–1430 (QPRR…VQSV). Residues Asn-1257, Asn-1344, Asn-1382, Asn-1577, Asn-1587, Asn-1665, Asn-1752, Asn-1776, Asn-1824, Asn-1908, Asn-1966, and Asn-2088 are each glycosylated (N-linked (GlcNAc...) asparagine). Fibronectin type-III domains follow at residues 1711 to 1814 (TAAA…TLHT), 1821 to 1920 (APRN…SYAP), 1922 to 2010 (PPLQ…TLGD), and 2014 to 2132 (APGR…AEPF). Residues 2142-2162 (VLAIIAPAAIVSSCVLALVLV) traverse the membrane as a helical segment. Over 2163-2594 (RKLQKRRHRA…LYANEGISGL (432 aa)) the chain is Cytoplasmic. One can recognise a Protein kinase domain in the interval 2224–2495 (LTLLRFLGSG…KRCLSTLQAL (272 aa)). Residues 2230-2238 (LGSGAFGEV) and Lys-2257 each bind ATP. The active-site Proton acceptor is the Asp-2355. Tyr-2391 carries the phosphotyrosine; by autocatalysis modification. The disordered stretch occupies residues 2543–2568 (TVSTTDADTTGSPTTPTAPTTPTTTT). The span at 2545 to 2568 (STTDADTTGSPTTPTAPTTPTTTT) shows a compositional bias: low complexity.

It belongs to the protein kinase superfamily. Tyr protein kinase family. Insulin receptor subfamily.

It is found in the cell membrane. The enzyme catalyses L-tyrosyl-[protein] + ATP = O-phospho-L-tyrosyl-[protein] + ADP + H(+). Receptor for an extracellular signal required to instruct a cell to differentiate into a R7 photoreceptor. The ligand for Sev is the Boss (Bride of Sevenless) protein. This is Protein sevenless (sev) from Drosophila virilis (Fruit fly).